Here is a 557-residue protein sequence, read N- to C-terminus: NADP-dependent malic enzyme (557 aa).

The active-site Proton donor is the tyrosine 88. Arginine 141 provides a ligand contact to NADP(+). Catalysis depends on lysine 159, which acts as the Proton acceptor. A divalent metal cation-binding residues include glutamate 231, aspartate 232, and aspartate 255. NADP(+) is bound at residue aspartate 255. Serine 322 carries the phosphoserine modification. Asparagine 394 contacts NADP(+).

The protein belongs to the malic enzymes family. In terms of assembly, homotetramer. The cofactor is Mg(2+). Requires Mn(2+) as cofactor.

The protein resides in the cytoplasm. The enzyme catalyses (S)-malate + NADP(+) = pyruvate + CO2 + NADPH. The catalysed reaction is oxaloacetate + H(+) = pyruvate + CO2. Its function is as follows. Catalyzes the oxidative decarboxylation of (S)-malate in the presence of NADP(+) and divalent metal ions, and decarboxylation of oxaloacetate. The sequence is that of NADP-dependent malic enzyme (ME1) from Sus scrofa (Pig).